The chain runs to 333 residues: CMP-N-acetylneuraminate-beta-galactosamide-alpha-2,3-sialyltransferase 4 (333 aa).

At 1–8 (MTSKSHWK) the chain is on the cytoplasmic side. Residues 9 to 26 (LLALALVLVVVMVWYSIS) form a helical; Signal-anchor for type II membrane protein membrane-spanning segment. Over 27-333 (REDRYIEFFY…MGAVKNLTYF (307 aa)) the chain is Lumenal. N-linked (GlcNAc...) asparagine glycans are attached at residues N61, N131, N310, and N329. Residues C120 and C273 are joined by a disulfide bond.

Belongs to the glycosyltransferase 29 family.

The protein resides in the golgi apparatus. The protein localises to the golgi stack membrane. The catalysed reaction is a beta-D-galactosyl-(1-&gt;3)-N-acetyl-beta-D-galactosaminyl derivative + CMP-N-acetyl-beta-neuraminate = an N-acetyl-alpha-neuraminyl-(2-&gt;3)-beta-D-galactosyl-(1-&gt;3)-N-acetyl-beta-D-galactosaminyl derivative + CMP + H(+). The enzyme catalyses a beta-D-galactosyl-(1-&gt;3)-N-acetyl-alpha-D-galactosaminyl derivative + CMP-N-acetyl-beta-neuraminate = an N-acetyl-alpha-neuraminyl-(2-&gt;3)-beta-D-galactosyl-(1-&gt;3)-N-acetyl-alpha-D-galactosaminyl derivative + CMP + H(+). It carries out the reaction a beta-D-galactosyl-(1-&gt;4)-N-acetyl-beta-D-glucosaminyl derivative + CMP-N-acetyl-beta-neuraminate = an N-acetyl-alpha-neuraminyl-(2-&gt;3)-beta-D-galactosyl-(1-&gt;4)-N-acetyl-beta-D-glucosaminyl derivative + CMP + H(+). It catalyses the reaction a ganglioside GM1 (d18:1(4E)) + CMP-N-acetyl-beta-neuraminate = a ganglioside GD1a (d18:1(4E)) + CMP + H(+). The catalysed reaction is a ganglioside GA1 (d18:1(4E)) + CMP-N-acetyl-beta-neuraminate = a ganglioside GM1b (d18:1(4E)) + CMP + H(+). The enzyme catalyses a ganglioside GT1c (d18:1(4E)) + CMP-N-acetyl-beta-neuraminate = a ganglioside GQ1c (d18:1(4E)) + CMP + H(+). It carries out the reaction a neolactoside nLc4Cer + CMP-N-acetyl-beta-neuraminate = a neolactoside IV(3)-alpha-NeuAc-nLc4Cer + CMP + H(+). It catalyses the reaction a neolactoside nLc4Cer(d18:1(4E)) + CMP-N-acetyl-beta-neuraminate = a neolactoside IV(3)-alpha-NeuAc-nLc4Cer(d18:1(4E)) + CMP + H(+). It participates in protein modification; protein glycosylation. The protein operates within glycolipid biosynthesis. In terms of biological role, a beta-galactoside alpha2-3 sialyltransferase involved in terminal sialylation of glycoproteins and glycolipids. Catalyzes the transfer of sialic acid (N-acetyl-neuraminic acid; Neu5Ac) from the nucleotide sugar donor CMP-Neu5Ac onto acceptor Galbeta-(1-&gt;3)-GalNAc- and Galbeta-(1-&gt;4)-GlcNAc-terminated glycoconjugates through an alpha2-3 linkage. Plays a major role in hemostasis. Responsible for sialylation of plasma VWF/von Willebrand factor, preventing its recognition by asialoglycoprotein receptors (ASGPR) and subsequent clearance. Regulates ASGPR-mediated clearance of platelets. Participates in the biosynthesis of the sialyl Lewis X epitopes, both on O- and N-glycans, which are recognized by SELE/E-selectin, SELP/P-selectin and SELL/L-selectin. Essential for selectin-mediated rolling and adhesion of leukocytes during extravasation. Contributes to adhesion and transendothelial migration of neutrophils likely through terminal sialylation of CXCR2. In glycosphingolipid biosynthesis, sialylates GM1 and GA1 gangliosides to form GD1a and GM1b, respectively. Metabolizes brain c-series ganglioside GT1c forming GQ1c. Synthesizes ganglioside LM1 (IV3Neu5Ac-nLc4Cer), a major structural component of peripheral nerve myelin. This is CMP-N-acetylneuraminate-beta-galactosamide-alpha-2,3-sialyltransferase 4 (St3gal4) from Rattus norvegicus (Rat).